The following is a 323-amino-acid chain: L-lactate dehydrogenase (323 aa).

Residues Val-16, Asn-37, and 81–82 (GA) contribute to the NAD(+) site. Substrate is bound by residues Gln-84, Arg-90, and 122–125 (NPVD). NAD(+) is bound by residues 120-122 (ATN) and Ser-145. 150 to 153 (DSAR) is a substrate binding site. The Proton acceptor role is filled by His-177. Tyr-221 bears the Phosphotyrosine mark. Thr-230 is a binding site for substrate.

The protein belongs to the LDH/MDH superfamily. LDH family. As to quaternary structure, homotetramer.

It is found in the cytoplasm. The enzyme catalyses (S)-lactate + NAD(+) = pyruvate + NADH + H(+). Its pathway is fermentation; pyruvate fermentation to lactate; (S)-lactate from pyruvate: step 1/1. In terms of biological role, catalyzes the conversion of lactate to pyruvate. In Limosilactobacillus reuteri (Lactobacillus reuteri), this protein is L-lactate dehydrogenase.